Reading from the N-terminus, the 295-residue chain is Nuclear transcription factor Y subunit A-2 (295 aa).

Positions 139 to 165 (YVNSKQYHGIIRRRQSRAKAAAVLDQK) match the Subunit association domain (SAD) motif. The NFYA/HAP2-type DNA-binding region spans 173–198 (KPYMHHSRHLHALRRPRGSGGRFLNT). The segment covering 178–189 (HSRHLHALRRPR) has biased composition (basic residues). The disordered stretch occupies residues 178-244 (HSRHLHALRR…VVHPENGTMN (67 aa)). Residues 197–209 (NTKSQNLENSGTN) are compositionally biased toward polar residues. A compositionally biased stretch (low complexity) spans 216–233 (SMQIQSQPKPQQSNSQNS).

The protein belongs to the NFYA/HAP2 subunit family. Heterotrimeric transcription factor composed of three components, NF-YA, NF-YB and NF-YC. NF-YB and NF-YC must interact and dimerize for NF-YA association and DNA binding. Component of a heat stress-inducible transcriptional complex with NF-YA and NF-YB subunits made, at least, of NFYA2, NFYB3 and DPB3-1 in cooperation with DREB2A. Ubiquitous. Expressed in seedlings, roots, petioles, hypocotyls, reproductive organ tissues and leaves.

The protein resides in the nucleus. In terms of biological role, stimulates the transcription of various genes by recognizing and binding to a CCAAT motif in promoters. Promotes the expression of heat stress-inducible genes by contributing to the formation of a heat stress-specific transcriptional complex with NF-Y subunits (e.g. DPB3-1, NF-YA2 and NF-YB3) and DREB2A at the promoter of target genes, thus promoting heat tolerance. This is Nuclear transcription factor Y subunit A-2 from Arabidopsis thaliana (Mouse-ear cress).